The following is a 258-amino-acid chain: Acyl-[acyl-carrier-protein]--UDP-N-acetylglucosamine O-acyltransferase (258 aa).

The protein belongs to the transferase hexapeptide repeat family. LpxA subfamily. In terms of assembly, homotrimer.

It is found in the cytoplasm. The catalysed reaction is a (3R)-hydroxyacyl-[ACP] + UDP-N-acetyl-alpha-D-glucosamine = a UDP-3-O-[(3R)-3-hydroxyacyl]-N-acetyl-alpha-D-glucosamine + holo-[ACP]. It functions in the pathway glycolipid biosynthesis; lipid IV(A) biosynthesis; lipid IV(A) from (3R)-3-hydroxytetradecanoyl-[acyl-carrier-protein] and UDP-N-acetyl-alpha-D-glucosamine: step 1/6. In terms of biological role, involved in the biosynthesis of lipid A, a phosphorylated glycolipid that anchors the lipopolysaccharide to the outer membrane of the cell. This Alkalilimnicola ehrlichii (strain ATCC BAA-1101 / DSM 17681 / MLHE-1) protein is Acyl-[acyl-carrier-protein]--UDP-N-acetylglucosamine O-acyltransferase.